A 378-amino-acid polypeptide reads, in one-letter code: D-alanine--D-alanine ligase (378 aa).

Residues 149 to 374 (KVLLAAAGIP…YTDLITKLIE (226 aa)) enclose the ATP-grasp domain. Residue 189 to 247 (EAGLQYPLFVKPSRAGSSFGVTKVEHEGDAAELAAAVYEASRHDWRILVEQGIDAREIE) participates in ATP binding. The Mg(2+) site is built by D328, E341, and N343.

It belongs to the D-alanine--D-alanine ligase family. Mg(2+) is required as a cofactor. Mn(2+) serves as cofactor.

The protein resides in the cytoplasm. The enzyme catalyses 2 D-alanine + ATP = D-alanyl-D-alanine + ADP + phosphate + H(+). It functions in the pathway cell wall biogenesis; peptidoglycan biosynthesis. In terms of biological role, cell wall formation. This is D-alanine--D-alanine ligase from Bifidobacterium adolescentis (strain ATCC 15703 / DSM 20083 / NCTC 11814 / E194a).